Consider the following 237-residue polypeptide: Ribosomal RNA small subunit methyltransferase G (237 aa).

S-adenosyl-L-methionine-binding positions include G78, F83, 129–130, and R148; that span reads AE.

It belongs to the methyltransferase superfamily. RNA methyltransferase RsmG family.

Its subcellular location is the cytoplasm. Functionally, specifically methylates the N7 position of a guanine in 16S rRNA. This is Ribosomal RNA small subunit methyltransferase G from Streptococcus thermophilus (strain ATCC BAA-491 / LMD-9).